Reading from the N-terminus, the 205-residue chain is Small ribosomal subunit protein uS4 (205 aa).

The interval 18 to 46 (NIWGRPKSPVNRREYGPGQHGQRRKGKLS) is disordered. Positions 94–157 (RRLDTVVYRA…KQLAFVLEAS (64 aa)) constitute an S4 RNA-binding domain.

This sequence belongs to the universal ribosomal protein uS4 family. Part of the 30S ribosomal subunit. Contacts protein S5. The interaction surface between S4 and S5 is involved in control of translational fidelity.

One of the primary rRNA binding proteins, it binds directly to 16S rRNA where it nucleates assembly of the body of the 30S subunit. In terms of biological role, with S5 and S12 plays an important role in translational accuracy. The sequence is that of Small ribosomal subunit protein uS4 from Rhodopseudomonas palustris (strain HaA2).